A 314-amino-acid polypeptide reads, in one-letter code: Deoxymugineic acid synthase 1 (314 aa).

D44 lines the NADP(+) pocket. Y49 (proton donor) is an active-site residue. H112 provides a ligand contact to substrate. Residues 158 to 159 (CN), Q180, 258 to 266 (FDEGRMKEN), and 273 to 281 (ELSEEERQR) each bind NADP(+).

Belongs to the aldo/keto reductase family.

It catalyses the reaction 2'-deoxymugineate + NAD(+) = 3''-deamino-3''-oxonicotianamine + NADH + H(+). The catalysed reaction is 2'-deoxymugineate + NADP(+) = 3''-deamino-3''-oxonicotianamine + NADPH + H(+). It functions in the pathway siderophore biosynthesis. Catalyzes the reduction of a 3''-keto intermediate during the biosynthesis of 2'-deoxymugineic acid (DMA) from L-Met. Involved in the formation of phytosiderophores (MAs) belonging to the mugineic acid family and required to acquire iron. The polypeptide is Deoxymugineic acid synthase 1 (Zea mays (Maize)).